We begin with the raw amino-acid sequence, 298 residues long: tRNA (guanine(9)-N1)-methyltransferase (298 aa).

The segment covering 1–10 has biased composition (polar residues); it reads MSDTSENSNA. Residues 1–44 form a disordered region; it reads MSDTSENSNAEIPADTSDVKDKPKPIVRAPQFPPPPEGISKSQW. The region spanning 96–285 is the SAM-dependent MTase TRM10-type domain; sequence PPKVNLNQSD…SVLPPRKLEV (190 aa). S-adenosyl-L-methionine contacts are provided by residues 192-193, Gly-212, 216-220, Cys-224, Leu-238, and 250-252; these read LT, DKNRH, and KVL. The active-site Proton acceptor is Asp-216.

This sequence belongs to the class IV-like SAM-binding methyltransferase superfamily. TRM10 family. In terms of assembly, monomer.

It is found in the cytoplasm. It localises to the nucleus. It catalyses the reaction guanosine(9) in tRNA + S-adenosyl-L-methionine = N(1)-methylguanosine(9) in tRNA + S-adenosyl-L-homocysteine + H(+). Functionally, S-adenosyl-L-methionine-dependent guanine N(1)-methyltransferase that catalyzes the formation of N(1)-methylguanine at position 9 (m1G9) in cytoplasmic tRNA. This chain is tRNA (guanine(9)-N1)-methyltransferase, found in Kluyveromyces lactis (strain ATCC 8585 / CBS 2359 / DSM 70799 / NBRC 1267 / NRRL Y-1140 / WM37) (Yeast).